The chain runs to 398 residues: Succinate--CoA ligase [ADP-forming] subunit beta (398 aa).

An ATP-grasp domain is found at K9–Q250. Residues K50, G57–G59, E104, L107, and E112 contribute to the ATP site. Mg(2+) contacts are provided by N205 and D219. Substrate contacts are provided by residues N270 and G327 to M329.

It belongs to the succinate/malate CoA ligase beta subunit family. In terms of assembly, heterotetramer of two alpha and two beta subunits. It depends on Mg(2+) as a cofactor.

The catalysed reaction is succinate + ATP + CoA = succinyl-CoA + ADP + phosphate. It catalyses the reaction GTP + succinate + CoA = succinyl-CoA + GDP + phosphate. It participates in carbohydrate metabolism; tricarboxylic acid cycle; succinate from succinyl-CoA (ligase route): step 1/1. Its function is as follows. Succinyl-CoA synthetase functions in the citric acid cycle (TCA), coupling the hydrolysis of succinyl-CoA to the synthesis of either ATP or GTP and thus represents the only step of substrate-level phosphorylation in the TCA. The beta subunit provides nucleotide specificity of the enzyme and binds the substrate succinate, while the binding sites for coenzyme A and phosphate are found in the alpha subunit. This is Succinate--CoA ligase [ADP-forming] subunit beta from Sorangium cellulosum (strain So ce56) (Polyangium cellulosum (strain So ce56)).